The following is a 147-amino-acid chain: DNA-directed RNA polymerase RPB6 homolog (147 aa).

This sequence belongs to the archaeal RpoK/eukaryotic RPB6 RNA polymerase subunit family. Part of the viral DNA-directed RNA polymerase that consists of 8 polII-like subunits (RPB1, RPB2, RPB3, RPB5, RPB6, RPB7, RPB9, RPB10), a capping enzyme and a termination factor.

The protein resides in the host cytoplasm. It is found in the virion. Functionally, component of the DNA-directed RNA polymerase (RNAP) that catalyzes the transcription in the cytoplasm of viral DNA into RNA using the four ribonucleoside triphosphates as substrates. The chain is DNA-directed RNA polymerase RPB6 homolog from Ornithodoros (relapsing fever ticks).